We begin with the raw amino-acid sequence, 106 residues long: Small ribosomal subunit protein uS17 (106 aa).

This sequence belongs to the universal ribosomal protein uS17 family. Part of the 30S ribosomal subunit.

Its function is as follows. One of the primary rRNA binding proteins, it binds specifically to the 5'-end of 16S ribosomal RNA. The sequence is that of Small ribosomal subunit protein uS17 from Methanosphaera stadtmanae (strain ATCC 43021 / DSM 3091 / JCM 11832 / MCB-3).